The sequence spans 1508 residues: Gem-associated protein 5 (1508 aa).

The important for interaction with U1 snRNA stretch occupies residues 1–124; it reads MGQEPRTLPP…LHWSPRVKDL (124 aa). Residues 13–15 are interaction with U4 snRNA; that stretch reads NWY. Ser48 carries the phosphoserine modification. At Thr51 the chain carries Phosphothreonine. WD repeat units lie at residues 62-104, 107-148, 150-189, 193-264, 280-321, 333-374, 377-417, 424-464, 468-509, 533-573, and 576-622; these read GHTE…VVTE, LHQH…QHLF, EPRT…EVIH, GHDD…GVMI, TVKE…RRKY, HSRI…CSWT, SLGG…NNYD, GVKS…PPQI, YHKK…IVLQ, KYKL…LICT, and QHHK…ESSP. A Phosphoserine modification is found at Ser624. WD repeat units lie at residues 637 to 677 and 680 to 720; these read GHTA…PLCN and GHRG…HSRP. Residues 715–790 are disordered; it reads QDHSRPPQGK…EGEEQAREPE (76 aa). Basic residues predominate over residues 739 to 748; that stretch reads AKPKKKKKPT. Thr751 carries the post-translational modification Phosphothreonine. Lys754 participates in a covalent cross-link: Glycyl lysine isopeptide (Lys-Gly) (interchain with G-Cter in SUMO2). Phosphoserine occurs at positions 757, 770, 778, and 847. Disordered regions lie at residues 1313–1343 and 1389–1428; these read EPSQ…ELDL and QKSQ…KNEP. The stretch at 1362–1393 forms a coiled coil; that stretch reads EKHASLQNSQRTVAEVQETLAEMIRQHQKSQL. A compositionally biased stretch (polar residues) spans 1390–1399; the sequence is KSQLCKSTAN.

It belongs to the WD repeat gemin-5 family. In terms of assembly, part of the core SMN complex that contains SMN1, GEMIN2/SIP1, DDX20/GEMIN3, GEMIN4, GEMIN5, GEMIN6, GEMIN7, GEMIN8 and STRAP/UNRIP. Part of the SMN-Sm complex that contains SMN1, GEMIN2/SIP1, DDX20/GEMIN3, GEMIN4, GEMIN5, GEMIN6, GEMIN7, GEMIN8, STRAP/UNRIP and the Sm proteins SNRPB, SNRPD1, SNRPD2, SNRPD3, SNRPE, SNRPF and SNRPG. Interacts with GEMIN2; the interaction is direct. Interacts with SMN1, SNRPB, SNRPD1, SNRPD2, SNRPD3 and SNRPE; the interaction is direct. Interacts with cytosolic DDX20/GEMIN3 and GEMIN4. Interacts with SNRNP70 and HNRNPU. Identified in a complex with 80S ribosomes; binds to the 60S large ribosomal subunit. Interacts with the ribosomal subunits RPL3 and RPL4.

Its subcellular location is the nucleus. The protein localises to the nucleoplasm. It is found in the gem. It localises to the cytoplasm. In terms of biological role, the SMN complex catalyzes the assembly of small nuclear ribonucleoproteins (snRNPs), the building blocks of the spliceosome, and thereby plays an important role in the splicing of cellular pre-mRNAs. Most spliceosomal snRNPs contain a common set of Sm proteins SNRPB, SNRPD1, SNRPD2, SNRPD3, SNRPE, SNRPF and SNRPG that assemble in a heptameric protein ring on the Sm site of the small nuclear RNA to form the core snRNP (Sm core). In the cytosol, the Sm proteins SNRPD1, SNRPD2, SNRPE, SNRPF and SNRPG are trapped in an inactive 6S pICln-Sm complex by the chaperone CLNS1A that controls the assembly of the core snRNP. To assemble core snRNPs, the SMN complex accepts the trapped 5Sm proteins from CLNS1A forming an intermediate. Binding of snRNA inside 5Sm ultimately triggers eviction of the SMN complex, thereby allowing binding of SNRPD3 and SNRPB to complete assembly of the core snRNP. Within the SMN complex, GEMIN5 recognizes and delivers the small nuclear RNAs (snRNAs) to the SMN complex. Binds to the 7-methylguanosine cap of RNA molecules. Binds to the 3'-UTR of SMN1 mRNA and regulates its translation; does not affect mRNA stability. May play a role in the regulation of protein synthesis via its interaction with ribosomes. In Homo sapiens (Human), this protein is Gem-associated protein 5 (GEMIN5).